A 152-amino-acid chain; its full sequence is Xanthine-guanine phosphoribosyltransferase (152 aa).

5-phospho-alpha-D-ribose 1-diphosphate contacts are provided by residues 37–38 (RG), arginine 69, and 88–96 (DDLVDTGGT). Position 69 (arginine 69) interacts with GMP. Residue aspartate 89 coordinates Mg(2+). Residues aspartate 92 and isoleucine 135 each contribute to the guanine site. Xanthine is bound by residues aspartate 92 and isoleucine 135. Residues 92 to 96 (DTGGT) and 134 to 135 (WI) contribute to the GMP site.

It belongs to the purine/pyrimidine phosphoribosyltransferase family. XGPT subfamily. In terms of assembly, homotetramer. The cofactor is Mg(2+).

It is found in the cell inner membrane. It catalyses the reaction GMP + diphosphate = guanine + 5-phospho-alpha-D-ribose 1-diphosphate. The catalysed reaction is XMP + diphosphate = xanthine + 5-phospho-alpha-D-ribose 1-diphosphate. It carries out the reaction IMP + diphosphate = hypoxanthine + 5-phospho-alpha-D-ribose 1-diphosphate. It functions in the pathway purine metabolism; GMP biosynthesis via salvage pathway; GMP from guanine: step 1/1. Its pathway is purine metabolism; XMP biosynthesis via salvage pathway; XMP from xanthine: step 1/1. Purine salvage pathway enzyme that catalyzes the transfer of the ribosyl-5-phosphate group from 5-phospho-alpha-D-ribose 1-diphosphate (PRPP) to the N9 position of the 6-oxopurines guanine and xanthine to form the corresponding ribonucleotides GMP (guanosine 5'-monophosphate) and XMP (xanthosine 5'-monophosphate), with the release of PPi. To a lesser extent, also acts on hypoxanthine. This chain is Xanthine-guanine phosphoribosyltransferase, found in Shigella boydii serotype 4 (strain Sb227).